Reading from the N-terminus, the 549-residue chain is Hydroxylamine reductase (549 aa).

[4Fe-4S] cluster-binding residues include Cys5, Cys8, Cys17, and Cys23. Residues His250, Glu274, Cys318, Cys404, Cys432, Cys457, Glu491, and Lys493 each coordinate hybrid [4Fe-2O-2S] cluster. Cys404 bears the Cysteine persulfide mark.

It belongs to the HCP family. [4Fe-4S] cluster is required as a cofactor. Requires hybrid [4Fe-2O-2S] cluster as cofactor.

Its subcellular location is the cytoplasm. The catalysed reaction is A + NH4(+) + H2O = hydroxylamine + AH2 + H(+). Catalyzes the reduction of hydroxylamine to form NH(3) and H(2)O. The polypeptide is Hydroxylamine reductase (Geobacter metallireducens (strain ATCC 53774 / DSM 7210 / GS-15)).